A 241-amino-acid polypeptide reads, in one-letter code: Ribosomal RNA small subunit methyltransferase G (241 aa).

S-adenosyl-L-methionine contacts are provided by residues G79, F84, 130–131 (AE), and R150.

It belongs to the methyltransferase superfamily. RNA methyltransferase RsmG family.

It is found in the cytoplasm. In terms of biological role, specifically methylates the N7 position of a guanine in 16S rRNA. This chain is Ribosomal RNA small subunit methyltransferase G, found in Limosilactobacillus reuteri (strain DSM 20016) (Lactobacillus reuteri).